A 94-amino-acid polypeptide reads, in one-letter code: Host-modulation protein 11K (94 aa).

Interacts with host GRB2; this interaction alters host cell environment by modulating host signaling pathways.

Its subcellular location is the host cytoplasm. Its function is as follows. Enhances viral DNA replication and virion release. Mechansitically, optimizes viral DNA replication by interacting with host GRB2 to inhibit the negative effect of ERK signaling on B19 viral replication. Plays a role in viral infectivity. Induces apoptosis of primary erythroid progenitor cells. This is Host-modulation protein 11K (11K) from Human parvovirus B19 (strain HV) (HPV B19).